The chain runs to 492 residues: MTLWINGDWVTGQGALRVKRNPVSGEVLWQGNDADAAQVGQACRAARAAFPRWARLSFGDRQVRVERFAGLLESNKAELTAIIARETGKPRWEAATEVTAMINKIAISIKAYHIRTGEQRSEMPDGAASLRHRPHGVLAVFGPYNFPGHLPNGHIVPALLAGNTIIFKPSELTPWSGEAVMRLWQQAGLPPGVLNLVQGGRETGQALSALEDLDGLLFTGSANTGYQLHRQLSGQPEKILALEMGGNNPLIIDEVADIDAAVHLTIQSAFVTAGQRCTCARRLLLKSGAQGDAFLARLVAVSQRLTPGKWDDEPQPFIGGLISDQAAQQVVTAWQQLEAMGGRPLLAPCLLQAGTSLLTPGIIEMTGVAGVPDEEVFGPLLRVWRYDNFDEAIRMANNTRFGLSCGLVSPAREKFDQLLLEARAGIVNWNKPLTGAASTAPFGGIGASGNHRPSAWYAADYCAWPMASLESDSLTLPATLNPGLDFSDEVVR.

Residue 220–225 (GSANTG) participates in NAD(+) binding. Residues E243 and C277 contribute to the active site.

It belongs to the aldehyde dehydrogenase family. AstD subfamily.

The enzyme catalyses N-succinyl-L-glutamate 5-semialdehyde + NAD(+) + H2O = N-succinyl-L-glutamate + NADH + 2 H(+). It participates in amino-acid degradation; L-arginine degradation via AST pathway; L-glutamate and succinate from L-arginine: step 4/5. Catalyzes the NAD-dependent reduction of succinylglutamate semialdehyde into succinylglutamate. The polypeptide is N-succinylglutamate 5-semialdehyde dehydrogenase (Escherichia coli O17:K52:H18 (strain UMN026 / ExPEC)).